A 154-amino-acid polypeptide reads, in one-letter code: UPF0756 membrane protein EAT1b_0668 (154 aa).

5 consecutive transmembrane segments (helical) span residues 5–25 (LFLL…VIIA), 52–72 (WGVT…DIGF), 82–102 (PVGI…GQGV), 107–127 (VDPV…GFMK), and 129–149 (IPVG…GYQV).

The protein belongs to the UPF0756 family.

It localises to the cell membrane. This is UPF0756 membrane protein EAT1b_0668 from Exiguobacterium sp. (strain ATCC BAA-1283 / AT1b).